The primary structure comprises 82 residues: DNA-directed RNA polymerase subunit omega (82 aa).

It belongs to the RNA polymerase subunit omega family. The RNAP catalytic core consists of 2 alpha, 1 beta, 1 beta' and 1 omega subunit. When a sigma factor is associated with the core the holoenzyme is formed, which can initiate transcription.

The catalysed reaction is RNA(n) + a ribonucleoside 5'-triphosphate = RNA(n+1) + diphosphate. In terms of biological role, promotes RNA polymerase assembly. Latches the N- and C-terminal regions of the beta' subunit thereby facilitating its interaction with the beta and alpha subunits. The sequence is that of DNA-directed RNA polymerase subunit omega from Lacticaseibacillus casei (strain BL23) (Lactobacillus casei).